The primary structure comprises 393 residues: S-adenosylmethionine synthase 2 (393 aa).

Glu-9 lines the Mg(2+) pocket. Residue His-15 participates in ATP binding. K(+) is bound at residue Glu-43. The L-methionine site is built by Glu-56 and Gln-99. ATP is bound by residues 167-169 (DGK), 235-238 (SGRF), Asp-246, 252-253 (RK), Ala-269, Lys-273, and Lys-277. Asp-246 lines the L-methionine pocket. Lys-277 is an L-methionine binding site.

It belongs to the AdoMet synthase family. In terms of assembly, homotetramer. Interacts with GRF3. Mn(2+) serves as cofactor. It depends on Mg(2+) as a cofactor. Requires Co(2+) as cofactor. The cofactor is K(+). Highly expressed in stems and roots. Detected in trichomes (at the protein level).

The protein resides in the cytoplasm. The enzyme catalyses L-methionine + ATP + H2O = S-adenosyl-L-methionine + phosphate + diphosphate. Its pathway is amino-acid biosynthesis; S-adenosyl-L-methionine biosynthesis; S-adenosyl-L-methionine from L-methionine: step 1/1. With respect to regulation, inhibited by 5,5'-dithiobis-2-nitrobenzoic acid (DTNB) and N-ethylmaleimide (NEM) (in vitro). In terms of biological role, catalyzes the formation of S-adenosylmethionine from methionine and ATP. The reaction comprises two steps that are both catalyzed by the same enzyme: formation of S-adenosylmethionine (AdoMet) and triphosphate, and subsequent hydrolysis of the triphosphate. This chain is S-adenosylmethionine synthase 2 (SAM2), found in Arabidopsis thaliana (Mouse-ear cress).